An 851-amino-acid chain; its full sequence is MAHETPDTPGETYDFRAIEAEWSEVWEREQPFRTPDASDSRPRKYILDMFPYPSGDLHMGHAEAFALGDAVARYWRQQGFNVLHPIGWDSFGLPAENAAIKRGVDPREWTYANIETQKQSMKRYGLSFDWERELHTSDPEYYRWNQWLFLKMHEKGLAYRKDSWVNWDPVDQTVLANEQVLPDGTSDRSGAVVVKKKLTQWYLRITDYADRLVDDLNQLEGTWPAKVISMQRNWIGRSIGAEVDFVVEGRDEPVTVFTTRPDTLHGATFMVVAPDSDLAAELVEGASDEVRERFRGYLERTQRLNEIERSTTDRPKTGIPLGRTAINPVNGERIPVWAADYLLADYGTGAVMAVPAHDQRDLDFARAFDLPVRVVVDTTQPVTGAIRIIPEDGELPDLEEVLPGRTGVALPGEGRLINSGSLNGLSKQPAIKRVIEQLEAEGRGRAAKNYRLRDWLISRQRFWGTPIPIVYDAEGNEIRVPEDQLPVRLPDTEGLDLAPKGKSPLAAATEWTNVPSPVDGSPATRDPDTMDTFMDSSWYWLRFLSPNDATKAFDPADADRWAPIDQYVGGVEHAILHLLYSRFITKVLFDLGYVTFTEPFSALLNQGMVLSGGSKMSKSKGGVDLGSEMDRHGVDAIRLTMAFAGPPEDDIDWEDVSPSGSAKFLARAWRLTGDITSAPEIEWKTGDEALRRVTHRFLAEAPGMLEAFKFNVVIARTMELVNAIRKTIDQGPGGGDAAVREATEVVAIALSLFAPYTAEDMWRRLGREGSVAFAGWRKAERNLLVQSTVTAVVQVDGKVRDKLEVDAKIGADELEALARETAGVKRSTAGRTIDKVIVRAPKIVSITTTAP.

Residues 51–61 (PYPSGDLHMGH) carry the 'HIGH' region motif. A 'KMSKS' region motif is present at residues 615 to 619 (KMSKS). Residue lysine 618 participates in ATP binding.

The protein belongs to the class-I aminoacyl-tRNA synthetase family.

It localises to the cytoplasm. It carries out the reaction tRNA(Leu) + L-leucine + ATP = L-leucyl-tRNA(Leu) + AMP + diphosphate. The polypeptide is Leucine--tRNA ligase (Clavibacter michiganensis subsp. michiganensis (strain NCPPB 382)).